We begin with the raw amino-acid sequence, 833 residues long: Leucine--tRNA ligase (833 aa).

The 'HIGH' region motif lies at 41–52; that stretch reads PYPSGAGLHVGH. The 'KMSKS' region motif lies at 610–614; that stretch reads KMSKS. Lys-613 contributes to the ATP binding site.

Belongs to the class-I aminoacyl-tRNA synthetase family.

It is found in the cytoplasm. The catalysed reaction is tRNA(Leu) + L-leucine + ATP = L-leucyl-tRNA(Leu) + AMP + diphosphate. The chain is Leucine--tRNA ligase from Streptococcus pneumoniae serotype 19F (strain G54).